A 117-amino-acid chain; its full sequence is Ig heavy chain V region 186-1 (117 aa).

The first 19 residues, 1–19 (MGWSCIMLFLAATATGVHS), serve as a signal peptide directing secretion. The framework-1 stretch occupies residues 20-49 (QVQLQQPGAELVKPGASVKLSCKASGYTFT). Cys41 and Cys115 are disulfide-bonded. The segment at 50–54 (SYWMH) is complementarity-determining-1. A framework-2 region spans residues 55–68 (WVKQRPGRGLEWIG). Positions 69-85 (RIDPNSGGTKYNEKFKS) are complementarity-determining-2. The tract at residues 86–117 (KATLTVDTSSSTAYMQLHSLTSEDSAVYYCAR) is framework-3.

The sequence is that of Ig heavy chain V region 186-1 from Mus musculus (Mouse).